We begin with the raw amino-acid sequence, 259 residues long: uncharacterized protein (259 aa).

Residues 110 to 259 (QMGHPLTAWG…VHTVFHYFLT (150 aa)) enclose the N-acetyltransferase domain.

Functionally, may be involved in maturation of the outermost layer of the spore. This is an uncharacterized protein from Bacillus subtilis (strain 168).